A 628-amino-acid chain; its full sequence is MALVSAVPLNSKLCLRRTLFGFSHELKAIHSTVPNLGMCRGGKSIAPSMSMSSTTSVSNEDGVPRRIAGHHSNLWDDDSIASLSTSYEAPSYRKRADKLIGEVKNIFDLMSVEDGVFTSPLSDLHHRLWMVDSVERLGIDRHFKDEINSALDHVYSYWTEKGIGRGRESGVTDLNSTALGLRTLRLHGYTVSSHVLDHFKNEKGQFTCSAIQTEGEIRDVLNLFRASLIAFPGEKIMEAAEIFSTMYLKDALQKIPPSGLSQEIEYLLEFGWHTNLPRMETRMYIDVFGEDTTFETPYLIREKLLELAKLEFNIFHSLVKRELQSLSRWWKDYGFPEITFSRHRHVEYYTLAACIANDPKHSAFRLGFGKISHMITILDDIYDTFGTMEELKLLTAAFKRWDPSSIECLPDYMKGVYMAVYDNINEMAREAQKIQGWDTVSYARKSWEAFIGAYIQEAKWISSGYLPTFDEYLENGKVSFGSRITTLEPMLTLGFPLPPRILQEIDFPSKFNDLICAILRLKGDTQCYKADRARGEEASAVSCYMKDHPGITEEDAVNQVNAMVDNLTKELNWELLRPDSGVPISYKKVAFDICRVFHYGYKYRDGFSVASIEIKNLVTRTVVETVPL.

Residues 1 to 48 constitute a chloroplast transit peptide; it reads MALVSAVPLNSKLCLRRTLFGFSHELKAIHSTVPNLGMCRGGKSIAPS. 3 residues coordinate Mg(2+): aspartate 379, aspartate 383, and aspartate 531. The DDXXD motif motif lies at 379 to 383; it reads DDIYD. A K(+)-binding site is contributed by serine 539.

The protein belongs to the terpene synthase family. Tpsd subfamily. Requires Mg(2+) as cofactor. The cofactor is Mn(2+). K(+) serves as cofactor.

It is found in the plastid. The protein resides in the chloroplast. It catalyses the reaction (2E)-geranyl diphosphate = (1R,5R)-alpha-pinene + diphosphate. The protein operates within terpene metabolism; oleoresin biosynthesis. Functionally, involved in defensive oleoresin formation in conifers in response to insect attack or other injury. Involved in monoterpene (C10) olefins biosynthesis. Produces mainly (+)-alpha-pinene (97%) with a small amount of (-)-alpha-pinene (3%). The sequence is that of (+)-alpha-pinene synthase, chloroplastic (PT30) from Pinus taeda (Loblolly pine).